Consider the following 591-residue polypeptide: MATLLQIGSGVIYSNALRKTLRRPQSSTCIIVTETTPCNKSPTVQRRSANYQPSRWDHHHLLSVENKFAKDKRVRERDLLKEKVRKMLNDEQKTYLDQLEFIDDLQKLGVSYHFEAEIDNILTSSYKKDRTNIQESDLHATALEFRLFRQHGFNVSEDVFDVFMENCGKFDRDDIYGLISLYEASYLSTKLDKNLQIFIRPFATQQLRDFVDTHSNEDFGSCDMVEIVVQALDMPYYWQMRRLSTRWYIDVYGKRQNYKNLVVVEFAKIDFNIVQAIHQEELKNVSSWWMETGLGKQLYFARDRIVENYFWTIGQIQEPQYGYVRQTMTKINALLTTIDDIYDIYGTLEELQLFTVAFENWDINRLDELPEYMRLCFLVIYNEVNSIACEILRTKNINVIPFLKKSWTDVSKAYLVEAKWYKSGHKPNLEEYMQNARISISSPTIFVHFYCVFSDQLSIQVLETLSQHQQNVVRCSSSVFRLANDLVTSPDELARGDVCKSIQCYMSETGASEDKARSHVRQMINDLWDEMNYEKMAHSSSILHHDFMETVINLARMSQCMYQYGDGHGSPEKAKIVDRVMSLLFNPIPLD.

Residues 1-45 constitute a chloroplast transit peptide; that stretch reads MATLLQIGSGVIYSNALRKTLRRPQSSTCIIVTETTPCNKSPTVQ. The (2E)-geranyl diphosphate site is built by arginine 302, aspartate 339, aspartate 343, arginine 481, and asparagine 484. Mg(2+) is bound by residues aspartate 339 and aspartate 343. The DDXXD motif motif lies at 339–343; the sequence is DDIYD. Residues asparagine 484, threonine 488, and glutamate 492 each contribute to the Mg(2+) site.

The protein belongs to the terpene synthase family. Tpsb subfamily. Mg(2+) serves as cofactor. Requires Mn(2+) as cofactor. Predominantly expressed in flowers but also in leaves, siliques and in stems.

Its subcellular location is the plastid. It is found in the chloroplast stroma. The enzyme catalyses (2E)-geranyl diphosphate = beta-myrcene + diphosphate. The catalysed reaction is (2E)-geranyl diphosphate = tricyclene + diphosphate. It carries out the reaction (2E)-geranyl diphosphate = (E)-beta-ocimene + diphosphate. Its pathway is secondary metabolite biosynthesis; terpenoid biosynthesis. Its function is as follows. Involved in monoterpene (C10) biosynthesis. The major product is beta-myrcene (56%) followed by (E)-beta-ocimene (20%) and minor amounts (less than 5%) of the cyclic monoterpene (-)-limonene, (+)-limonene, 2-carene and tricyclene. The protein is Tricyclene synthase, chloroplastic of Arabidopsis thaliana (Mouse-ear cress).